Consider the following 816-residue polypeptide: Fibroblast growth factor receptor (816 aa).

A signal peptide spans 1–19 (MISDWCVVLVLLMSRLVFG). Residues 20–370 (LNFTEPVNYI…YKEESVEKTV (351 aa)) lie on the Extracellular side of the membrane. 9 N-linked (GlcNAc...) asparagine glycosylation sites follow: N21, N69, N119, N156, N171, N244, N274, N313, and N321. The Ig-like C2-type 1 domain occupies 25–105 (PVNYILKLGE…VTAMNEESVQ (81 aa)). C43 and C94 form a disulfide bridge. The Ig-like C2-type 2 domain maps to 126–217 (LRIKNDISLL…GKIEHIMTVE (92 aa)). Residues C147 and C201 are joined by a disulfide bond. A helical transmembrane segment spans residues 371–391 (IFIVITSMLAGLIFVAFVIFF). Over 392–816 (ICRVRSKDKF…DILLSHYAVS (425 aa)) the chain is Cytoplasmic. Residues 474-747 (LETDCLLGEG…QLIEDLERML (274 aa)) enclose the Protein kinase domain. Residues 480-488 (LGEGAFGRV) and K508 each bind ATP. Residue D612 is the Proton acceptor of the active site. The residue at position 643 (Y643) is a Phosphotyrosine; by autocatalysis.

This sequence belongs to the protein kinase superfamily. Tyr protein kinase family. Fibroblast growth factor receptor subfamily.

The protein localises to the membrane. It catalyses the reaction L-tyrosyl-[protein] + ATP = O-phospho-L-tyrosyl-[protein] + ADP + H(+). Functionally, receptor for basic fibroblast growth factor. The chain is Fibroblast growth factor receptor (FGFR) from Hydra vulgaris (Hydra).